Consider the following 568-residue polypeptide: PCNA-interacting partner (568 aa).

The segment at 442 to 555 (QIPTCVHPAP…RNNKAVSKKL (114 aa)) is disordered. The segment covering 488-500 (NAWNQTGGKSTQP) has biased composition (polar residues). A compositionally biased stretch (basic and acidic residues) spans 515 to 527 (ANRECTEQGREEN).

This sequence belongs to the PARI family.

The protein localises to the cytoplasm. The protein resides in the nucleus. Its function is as follows. Required to suppress inappropriate homologous recombination, thereby playing a central role DNA repair and in the maintenance of genomic stability. The polypeptide is PCNA-interacting partner (parpbp) (Danio rerio (Zebrafish)).